A 564-amino-acid polypeptide reads, in one-letter code: Probable diguanylate cyclase DgcQ (564 aa).

2 consecutive transmembrane segments (helical) span residues Leu-20–Leu-40 and Ile-360–Ile-380. The 136-residue stretch at His-428–Asn-563 folds into the GGDEF domain. Position 436 (Asp-436) interacts with Mg(2+). Positions 444, 449, and 453 each coordinate substrate. Glu-479 serves as a coordination point for Mg(2+). Glu-479 serves as the catalytic Proton acceptor.

Homodimer. The cofactor is Mg(2+).

It is found in the cell inner membrane. The catalysed reaction is 2 GTP = 3',3'-c-di-GMP + 2 diphosphate. The protein operates within glycan metabolism; bacterial cellulose biosynthesis. It participates in purine metabolism; 3',5'-cyclic di-GMP biosynthesis. Catalyzes the synthesis of cyclic-di-GMP (c-di-GMP) via the condensation of 2 GTP molecules. Cyclic-di-GMP is a second messenger which controls cell surface-associated traits in bacteria. Involved in the regulation of cellulose production. The polypeptide is Probable diguanylate cyclase DgcQ (Escherichia coli O157:H7).